The chain runs to 381 residues: Transaldolase 2 (381 aa).

Lys141 acts as the Schiff-base intermediate with substrate in catalysis.

This sequence belongs to the transaldolase family. Type 2 subfamily.

The protein localises to the cytoplasm. The enzyme catalyses D-sedoheptulose 7-phosphate + D-glyceraldehyde 3-phosphate = D-erythrose 4-phosphate + beta-D-fructose 6-phosphate. It participates in carbohydrate degradation; pentose phosphate pathway; D-glyceraldehyde 3-phosphate and beta-D-fructose 6-phosphate from D-ribose 5-phosphate and D-xylulose 5-phosphate (non-oxidative stage): step 2/3. In terms of biological role, transaldolase is important for the balance of metabolites in the pentose-phosphate pathway. In Nostoc sp. (strain PCC 7120 / SAG 25.82 / UTEX 2576), this protein is Transaldolase 2 (tal2).